The primary structure comprises 274 residues: Nitrogenase iron protein (274 aa).

8 to 15 (GKGGIGKS) is a binding site for ATP. C94 contacts [4Fe-4S] cluster. At R97 the chain carries ADP-ribosylarginine; by dinitrogenase reductase ADP-ribosyltransferase. C131 contacts [4Fe-4S] cluster.

This sequence belongs to the NifH/BchL/ChlL family. Homodimer. [4Fe-4S] cluster serves as cofactor. The reversible ADP-ribosylation of Arg-97 inactivates the nitrogenase reductase and regulates nitrogenase activity.

The enzyme catalyses N2 + 8 reduced [2Fe-2S]-[ferredoxin] + 16 ATP + 16 H2O = H2 + 8 oxidized [2Fe-2S]-[ferredoxin] + 2 NH4(+) + 16 ADP + 16 phosphate + 6 H(+). The key enzymatic reactions in nitrogen fixation are catalyzed by the nitrogenase complex, which has 2 components: the iron protein and the molybdenum-iron protein. The protein is Nitrogenase iron protein of Chlorobium phaeovibrioides (strain DSM 265 / 1930) (Prosthecochloris vibrioformis (strain DSM 265)).